Reading from the N-terminus, the 420-residue chain is Phosphatidylinositol 5-phosphate 4-kinase type-2 gamma (420 aa).

N-acetylalanine is present on Ala2. Ser26 carries the post-translational modification Phosphoserine. The PIPK domain occupies 43 to 419; the sequence is AADPLVGVFL…RFLDFISNIF (377 aa). The segment at 69-75 is required for interaction with PIP5K1A; sequence VMLLPDD. Phosphoserine is present on Ser349.

Interacts with PIP5K1A; the interaction inhibits PIP5K1A kinase activity. Post-translationally, phosphorylated, phosphorylation is induced by EGF. In terms of tissue distribution, widely expressed, with the most abundant expression in kidney.

The protein resides in the endoplasmic reticulum. Its subcellular location is the cytoplasm. The catalysed reaction is a 1,2-diacyl-sn-glycero-3-phospho-(1D-myo-inositol-5-phosphate) + ATP = a 1,2-diacyl-sn-glycero-3-phospho-(1D-myo-inositol-4,5-bisphosphate) + ADP + H(+). It catalyses the reaction 1,2-dihexadecanoyl-sn-glycero-3-phospho-(1D-myo-inositol-5-phosphate) + ATP = 1,2-dihexadecanoyl-sn-glycero-3-phospho-(1D-myo-inositol-4,5-bisphosphate) + ADP + H(+). The enzyme catalyses 1,2-dihexadecanoyl-sn-glycero-3-phospho-(1D-myo-inositol-5-phosphate) + GTP = 1,2-dihexadecanoyl-sn-glycero-3-phospho-(1D-myo-inositol-4,5-bisphosphate) + GDP + H(+). Its function is as follows. Phosphatidylinositol 5-phosphate 4-kinase with low enzymatic activity. May be a GTP sensor, has higher GTP-dependent kinase activity than ATP-dependent kinase activity. PIP4Ks negatively regulate insulin signaling through a catalytic-independent mechanism. They interact with PIP5Ks and suppress PIP5K-mediated PtdIns(4,5)P2 synthesis and insulin-dependent conversion to PtdIns(3,4,5)P3. This chain is Phosphatidylinositol 5-phosphate 4-kinase type-2 gamma, found in Rattus norvegicus (Rat).